The following is a 181-amino-acid chain: Protein GrpE (181 aa).

The span at 1 to 20 (MENTQENPASQSAEENGSET) shows a compositional bias: polar residues. The interval 1-39 (MENTQENPASQSAEENGSETQAAQDAAPAAEAADAALAE) is disordered. Over residues 21-39 (QAAQDAAPAAEAADAALAE) the composition is skewed to low complexity.

It belongs to the GrpE family. As to quaternary structure, homodimer.

Its subcellular location is the cytoplasm. Its function is as follows. Participates actively in the response to hyperosmotic and heat shock by preventing the aggregation of stress-denatured proteins, in association with DnaK and GrpE. It is the nucleotide exchange factor for DnaK and may function as a thermosensor. Unfolded proteins bind initially to DnaJ; upon interaction with the DnaJ-bound protein, DnaK hydrolyzes its bound ATP, resulting in the formation of a stable complex. GrpE releases ADP from DnaK; ATP binding to DnaK triggers the release of the substrate protein, thus completing the reaction cycle. Several rounds of ATP-dependent interactions between DnaJ, DnaK and GrpE are required for fully efficient folding. The polypeptide is Protein GrpE (Burkholderia multivorans (strain ATCC 17616 / 249)).